The primary structure comprises 266 residues: Glucosamine-6-phosphate deaminase (266 aa).

The Proton acceptor; for enolization step role is filled by Asp-72. The active-site For ring-opening step is Asp-141. Catalysis depends on His-143, which acts as the Proton acceptor; for ring-opening step. Glu-148 (for ring-opening step) is an active-site residue.

Belongs to the glucosamine/galactosamine-6-phosphate isomerase family. NagB subfamily. In terms of assembly, homohexamer.

The enzyme catalyses alpha-D-glucosamine 6-phosphate + H2O = beta-D-fructose 6-phosphate + NH4(+). It participates in amino-sugar metabolism; N-acetylneuraminate degradation; D-fructose 6-phosphate from N-acetylneuraminate: step 5/5. Allosterically activated by N-acetylglucosamine 6-phosphate (GlcNAc6P). Its function is as follows. Catalyzes the reversible isomerization-deamination of glucosamine 6-phosphate (GlcN6P) to form fructose 6-phosphate (Fru6P) and ammonium ion. In Erwinia tasmaniensis (strain DSM 17950 / CFBP 7177 / CIP 109463 / NCPPB 4357 / Et1/99), this protein is Glucosamine-6-phosphate deaminase.